The chain runs to 103 residues: Small ribosomal subunit protein bS20 (103 aa).

Residues 1-20 show a composition bias toward basic residues; that stretch reads MATAKPKKKNPRLASGRKRV. Residues 1–31 form a disordered region; that stretch reads MATAKPKKKNPRLASGRKRVRQDTKLNAANT.

It belongs to the bacterial ribosomal protein bS20 family.

Binds directly to 16S ribosomal RNA. The chain is Small ribosomal subunit protein bS20 from Polaromonas sp. (strain JS666 / ATCC BAA-500).